Reading from the N-terminus, the 85-residue chain is Large ribosomal subunit protein bL27 (85 aa).

Belongs to the bacterial ribosomal protein bL27 family.

This is Large ribosomal subunit protein bL27 from Xylella fastidiosa (strain 9a5c).